The following is a 161-amino-acid chain: RuBisCO chaperone RbcX (161 aa).

2 disordered regions span residues 1–20 (MQFMGTASRMASTQRAKPME) and 130–161 (LGAEPSLPETEVSDRPSDSATPDDASNASHAD). Positions 147–161 (DSATPDDASNASHAD) are enriched in polar residues.

The protein belongs to the RbcX family. Homodimer. Interacts with the exposed C-terminal peptide of endogenous RbcL ('Lys-460-Asp-470') via its central cleft, as well as C-terminal peptides from other cyanobacterial RbcL. Contacts a second RbcL monomer via its peripheral polar surface.

It localises to the carboxysome. The protein localises to the cytoplasm. In terms of biological role, an RbcL-specific chaperone. The central cleft of the RbcX homodimer (RbcX2) binds the C-terminus of an RbcL monomer, stabilizing the C-terminus and probably preventing its reassociation with chaperonin GroEL-ES. At the same time the peripheral region of RbcX2 binds a second RbcL monomer, bridging the RbcL homodimers in the correct orientation. The RbcX2(2)-bound RbcL dimers then assemble into the RbcL8 core (RbcL8-(RbcX2)8). RbcS binding triggers the release of RbcX2. The sequence is that of RuBisCO chaperone RbcX from Synechococcus sp. (strain ATCC 27144 / PCC 6301 / SAUG 1402/1) (Anacystis nidulans).